The sequence spans 146 residues: KMGPVLCHLVPYAQGLAVQVSTITLTVIALDRHRCIVYHLESKISKQISFLIIGLAWGVSALLASPLAIFREYSLIEIIPDFEIVACTEKWPGEEKGIYGTVYSLLSLLILYVLPLGIISFSYARIWSKLKNHVSPGAAHDHYHQR.

Over 1 to 8 (KMGPVLCH) the chain is Extracellular. A disulfide bridge connects residues Cys-7 and Cys-87. The chain crosses the membrane as a helical span at residues 9-29 (LVPYAQGLAVQVSTITLTVIA). Over 30–49 (LDRHRCIVYHLESKISKQIS) the chain is Cytoplasmic. A helical transmembrane segment spans residues 50-70 (FLIIGLAWGVSALLASPLAIF). Topologically, residues 71–100 (REYSLIEIIPDFEIVACTEKWPGEEKGIYG) are extracellular. Residues 101-121 (TVYSLLSLLILYVLPLGIISF) traverse the membrane as a helical segment. The Cytoplasmic segment spans residues 122–146 (SYARIWSKLKNHVSPGAAHDHYHQR).

The protein belongs to the G-protein coupled receptor 1 family.

It localises to the cell membrane. In terms of biological role, receptor for neuropeptide Y and peptide YY. In Ovis aries (Sheep), this protein is Neuropeptide Y receptor type 2 (NPY2R).